Here is a 539-residue protein sequence, read N- to C-terminus: Chaperonin GroEL (539 aa).

ATP contacts are provided by residues 30 to 33 (TLGP), lysine 51, 87 to 91 (DGTTT), glycine 415, 479 to 481 (NAA), and aspartate 495.

Belongs to the chaperonin (HSP60) family. As to quaternary structure, forms a cylinder of 14 subunits composed of two heptameric rings stacked back-to-back. Interacts with the co-chaperonin GroES.

The protein localises to the cytoplasm. The enzyme catalyses ATP + H2O + a folded polypeptide = ADP + phosphate + an unfolded polypeptide.. Its function is as follows. Together with its co-chaperonin GroES, plays an essential role in assisting protein folding. The GroEL-GroES system forms a nano-cage that allows encapsulation of the non-native substrate proteins and provides a physical environment optimized to promote and accelerate protein folding. In Enterobacter asburiae, this protein is Chaperonin GroEL.